A 493-amino-acid polypeptide reads, in one-letter code: Ferruginol synthase 1 (493 aa).

A helical transmembrane segment spans residues 2–22; it reads DSFPLLAALFFILAATWFISF. Cys437 contributes to the heme binding site.

Belongs to the cytochrome P450 family. Heme is required as a cofactor. As to expression, expressed in leaf glandular trichomes.

It is found in the membrane. The catalysed reaction is abieta-8,11,13-triene + reduced [NADPH--hemoprotein reductase] + O2 = ferruginol + oxidized [NADPH--hemoprotein reductase] + H2O + H(+). It catalyses the reaction ferruginol + reduced [NADPH--hemoprotein reductase] + O2 = 11-hydroxyferruginol + oxidized [NADPH--hemoprotein reductase] + H2O + H(+). It carries out the reaction miltiradiene + 2 reduced [NADPH--hemoprotein reductase] + 2 O2 = 11-oxomiltiradiene + 2 oxidized [NADPH--hemoprotein reductase] + 3 H2O + 2 H(+). It participates in secondary metabolite biosynthesis; terpenoid biosynthesis. In terms of biological role, monooxygenase involved in the biosynthesis of labdane-related diterpenes natural products. Catalyzes the oxidation of abietatriene to produce ferruginol. Catalyzes the oxidation of ferruginol at C-12 to produce 11-hydroxyferruginol. Ferruginol and 11-hydroxyferruginol are intermediates in the biosynthesis of carnosate, a potent antioxidant. May also convert miltiradiene into 11-oxomiltiradiene. This Rosmarinus officinalis (Rosemary) protein is Ferruginol synthase 1.